The primary structure comprises 749 residues: Phosphate-regulating neutral endopeptidase PHEX (749 aa).

Residues 1 to 20 lie on the Cytoplasmic side of the membrane; the sequence is MEAETGSTMETGKGTNRGIR. A helical; Signal-anchor for type II membrane protein transmembrane segment spans residues 21-37; it reads IALALFIGGTLVLGTLL. Residues 38-749 lie on the Extracellular side of the membrane; sequence FLVSQGLLSF…NRGADSCRLW (712 aa). A Peptidase M13 domain is found at 53-749; the sequence is YCLKPECIEA…NRGADSCRLW (697 aa). The cysteines at positions 54 and 59 are disulfide-linked. Residues N71, N238, N263, N290, N301, N377, and N484 are each glycosylated (N-linked (GlcNAc...) asparagine). Disulfide bonds link C77–C733, C85–C693, C142–C406, and C617–C746. H580 contributes to the Zn(2+) binding site. The active site involves E581. Zn(2+) is bound by residues H584 and E642. Residue D646 is the Proton donor of the active site. N736 is a glycosylation site (N-linked (GlcNAc...) asparagine).

This sequence belongs to the peptidase M13 family. Interacts with MEPE; the interaction is zinc-dependent (via ASARM motif). Zn(2+) is required as a cofactor. Post-translationally, N-glycosylated. Expressed in bone, specifically in the osteoid and in osteocytes. Expressed in teeth, specifically in odontoblasts and ameloblasts. Expressed moderately by macrophages in the liver and has minimal expression in brown adipose tissue. Also expressed in suprabasal layers of the skin.

The protein resides in the cell membrane. Functionally, peptidase that cleaves SIBLING (small integrin-binding ligand, N-linked glycoprotein)-derived ASARM peptides, thus regulating their biological activity. Cleaves ASARM peptides between Ser and Glu or Asp residues. Regulates osteogenic cell differentiation and bone mineralization through the cleavage of the MEPE-derived ASARM peptide. Promotes dentin mineralization and renal phosphate reabsorption by cleaving DMP1- and MEPE-derived ASARM peptides. Inhibits the cleavage of MEPE by CTSB/cathepsin B thus preventing MEPE degradation. The polypeptide is Phosphate-regulating neutral endopeptidase PHEX (Phex) (Mus musculus (Mouse)).